We begin with the raw amino-acid sequence, 330 residues long: Elongation factor Ts, mitochondrial (330 aa).

The N-terminal 16 residues, 1-16, are a transit peptide targeting the mitochondrion; it reads MYRNCRKAFTFSLRHY.

Belongs to the EF-Ts family.

It localises to the mitochondrion. Functionally, associates with the EF-Tu.GDP complex and induces the exchange of GDP to GTP. It remains bound to the aminoacyl-tRNA.EF-Tu.GTP complex up to the GTP hydrolysis stage on the ribosome. In Laccaria bicolor (strain S238N-H82 / ATCC MYA-4686) (Bicoloured deceiver), this protein is Elongation factor Ts, mitochondrial.